The chain runs to 402 residues: Lipid-A-disaccharide synthase (402 aa).

Belongs to the LpxB family.

It catalyses the reaction a lipid X + a UDP-2-N,3-O-bis[(3R)-3-hydroxyacyl]-alpha-D-glucosamine = a lipid A disaccharide + UDP + H(+). Its pathway is bacterial outer membrane biogenesis; LPS lipid A biosynthesis. Functionally, condensation of UDP-2,3-diacylglucosamine and 2,3-diacylglucosamine-1-phosphate to form lipid A disaccharide, a precursor of lipid A, a phosphorylated glycolipid that anchors the lipopolysaccharide to the outer membrane of the cell. The sequence is that of Lipid-A-disaccharide synthase from Cupriavidus pinatubonensis (strain JMP 134 / LMG 1197) (Cupriavidus necator (strain JMP 134)).